The following is a 23-amino-acid chain: GLWQKIKSAAGDLASGIVEGIKS.

In terms of tissue distribution, expressed by the skin parotoid and/or rostral glands.

Its subcellular location is the secreted. Functionally, antibacterial peptide, that adopts an alpha helical conformation which can disrupt bacterial membranes. Each caerin displays a different antimicrobial specificity. The polypeptide is Caerin-4.1 (Ranoidea caerulea (Green tree frog)).